The sequence spans 354 residues: Transcription factor ATOH1 (354 aa).

Positions 1–21 are enriched in basic and acidic residues; the sequence is MSRLLHAEEWAEVKELGDHHR. Disordered regions lie at residues 1–55 and 91–122; these read MSRL…ELSL and EAAA…PGPV. Residues 26–38 show a composition bias toward pro residues; it reads HHLPQPPPPPQPP. Over residues 94–107 the composition is skewed to basic and acidic residues; that stretch reads APRDEVDGRGELVR. Residues 108–122 are compositionally biased toward low complexity; sequence RSSGGASSSKSPGPV. Residues 159–211 enclose the bHLH domain; sequence QRRLAANARERRRMHGLNHAFDQLRNVIPSFNNDKKLSKYETLQMAQIYINAL. 2 disordered regions span residues 216–277 and 312–354; these read QTPS…TRFS and SPSL…DEAS. Residues 250-264 show a composition bias toward low complexity; the sequence is NATAAGAQQASGGSQ. A compositionally biased stretch (basic and acidic residues) spans 335 to 354; it reads HRSDGEFSPHSHYSDSDEAS.

Efficient DNA binding requires dimerization with another bHLH protein.

It is found in the nucleus. Its function is as follows. Transcriptional regulator. Activates E box-dependent transcription in collaboration with TCF3/E47, but the activity is completely antagonized by the negative regulator of neurogenesis HES1. Plays a role in the differentiation of subsets of neural cells by activating E box-dependent transcription. The protein is Transcription factor ATOH1 of Homo sapiens (Human).